The following is a 64-amino-acid chain: Large ribosomal subunit protein bL35 (64 aa).

This sequence belongs to the bacterial ribosomal protein bL35 family.

The chain is Large ribosomal subunit protein bL35 from Chloroherpeton thalassium (strain ATCC 35110 / GB-78).